Reading from the N-terminus, the 132-residue chain is Small ribosomal subunit protein uS8 (132 aa).

Belongs to the universal ribosomal protein uS8 family. As to quaternary structure, part of the 30S ribosomal subunit. Contacts proteins S5 and S12.

Its function is as follows. One of the primary rRNA binding proteins, it binds directly to 16S rRNA central domain where it helps coordinate assembly of the platform of the 30S subunit. In Clostridium kluyveri (strain NBRC 12016), this protein is Small ribosomal subunit protein uS8.